Here is a 378-residue protein sequence, read N- to C-terminus: RNA polymerase sigma factor SigA (378 aa).

Residues 1-29 form a disordered region; that stretch reads MKNKTEVKNGGEKKNSKKVSKEESAKEKN. The sigma-70 factor domain-2 stretch occupies residues 145–215; it reads LAEANLRLVV…TRAIADQART (71 aa). Residues 169–172 carry the Interaction with polymerase core subunit RpoC motif; the sequence is DLIQ. The segment at 224–300 is sigma-70 factor domain-3; the sequence is ETINKLIRVS…DDEAPAPADA (77 aa). The segment at 313 to 366 is sigma-70 factor domain-4; the sequence is ILNTLTPREEKVLRLRFGLDDGRARTLEEVGKEFNVTRERIRQIEAKALRKLRH. A DNA-binding region (H-T-H motif) is located at residues 339–358; the sequence is LEEVGKEFNVTRERIRQIEA.

The protein belongs to the sigma-70 factor family. RpoD/SigA subfamily. As to quaternary structure, interacts transiently with the RNA polymerase catalytic core.

The protein resides in the cytoplasm. Functionally, sigma factors are initiation factors that promote the attachment of RNA polymerase to specific initiation sites and are then released. This sigma factor is the primary sigma factor during exponential growth. In Clostridium acetobutylicum (strain ATCC 824 / DSM 792 / JCM 1419 / IAM 19013 / LMG 5710 / NBRC 13948 / NRRL B-527 / VKM B-1787 / 2291 / W), this protein is RNA polymerase sigma factor SigA.